The primary structure comprises 705 residues: MVYGLGEALKNLNSYCQERTTRIRNSLSPSRPSMSEATATGSSSSSRASTTIPSTPNMDVTPTVEDPRQNDNNASGMTRDEFRQYGKETVDYIVDYLENIQKRRVVPAIEPGYLKDLIPSEAPNTPESFESVMEDFEKLIMPGITHWQHPRFHAYFPAGNSFPSIIADMLSDAIGCVGFSWAACPAMTELELIMLDWFGKMIGLPAEFLPLTENGKGGGVIQSSASECNFVTLLAARFEVMKELRQRFPFVEEGLLLSKLIAYCSKEAHSSVEKACMIGMVKLRILETDSKFRLRGDTLRNAIQEDRNLGLIPFFVSTTLGTTSCCSFDVLSEIGPICKENELWLHVDAAYSGSAFICPEFRPLMNGIEYAMSFNTNPNKWLLINFDCSTMWVRDRFKLTQALVVDPLYLQHSWMDKSIDYRHWGIPLSRRFRSLKLWFVIRMYGIDGLQKYIREHVRLAKKMETLLRADAKFEIVNEVIMGLVCFRMKGDDELNQTLLTRLNASGRIHMVPASLGDRFVIRFCVCAENATDKDIEVAYEIIAQATQHVLHDSVKAVIAEEDEEAVALEEMVADLNITETPEKCLTRQNSANAAESGQKLERQLSKEEILAQKQHESLAKKRSFLVRMVSDPKCYNPKIVRHLNMANHRKMSQDLYRDRTLMQTISHSQRPNRLSQSPGSAGSAFFDDDDDRIVADVQTGLQTPI.

Positions 22-32 (RIRNSLSPSRP) are enriched in polar residues. Residues 22–81 (RIRNSLSPSRPSMSEATATGSSSSSRASTTIPSTPNMDVTPTVEDPRQNDNNASGMTRDE) form a disordered region. Positions 33–55 (SMSEATATGSSSSSRASTTIPST) are enriched in low complexity. Residue Lys380 is modified to N6-(pyridoxal phosphate)lysine. The stretch at 554 to 620 (VKAVIAEEDE…AQKQHESLAK (67 aa)) forms a coiled coil. Over residues 667–678 (HSQRPNRLSQSP) the composition is skewed to polar residues. A disordered region spans residues 667–687 (HSQRPNRLSQSPGSAGSAFFD).

The protein belongs to the group II decarboxylase family. It depends on pyridoxal 5'-phosphate as a cofactor. In terms of tissue distribution, expressed in the gonadal sheath projections in between the oocytes, in head RIM motor neurons and RIC interneurons.

It localises to the cytoplasm. It is found in the cell projection. The protein localises to the axon. The protein resides in the perikaryon. It catalyses the reaction L-tyrosine + H(+) = tyramine + CO2. Required for the decarboxylation of tyrosine to tyramine, a precursor of octopamine but probably also itself a neurotransmitter. Involved in the regulation of egg laying, which is inhibited by tyramine. Also involved in controlling locomotion and head movements. Due to its involvement in octopamine biosynthesis, also required for crtc-1-dependent regulation of AMPK-mediated longevity which requires octopamine signaling. The protein is Tyrosine decarboxylase of Caenorhabditis elegans.